The primary structure comprises 318 residues: Ribosomal RNA small subunit methyltransferase H (318 aa).

S-adenosyl-L-methionine-binding positions include 33–35, Asp-53, Phe-80, Asp-101, and Gln-108; that span reads GGH.

It belongs to the methyltransferase superfamily. RsmH family.

Its subcellular location is the cytoplasm. The catalysed reaction is cytidine(1402) in 16S rRNA + S-adenosyl-L-methionine = N(4)-methylcytidine(1402) in 16S rRNA + S-adenosyl-L-homocysteine + H(+). Functionally, specifically methylates the N4 position of cytidine in position 1402 (C1402) of 16S rRNA. This is Ribosomal RNA small subunit methyltransferase H from Symbiobacterium thermophilum (strain DSM 24528 / JCM 14929 / IAM 14863 / T).